The chain runs to 690 residues: Long-chain fatty acid transport protein 5 (690 aa).

The Cytoplasmic portion of the chain corresponds to 1-30; that stretch reads MGVRQQLALLLLLLLLLWGLGQPVWPVAVA. 2 helical membrane passes run 31–51 and 56–76; these read LTLR…LAML and LGPW…LTLL. The Cytoplasmic segment spans residues 77–690; it reads PARLPPGLRW…QAVCEGTWRL (614 aa). Position 292-303 (292-303) interacts with AMP; sequence FIYTSGTTGLPK. Residue Ser501 is modified to Phosphoserine.

This sequence belongs to the ATP-dependent AMP-binding enzyme family. In terms of tissue distribution, predominantly expressed in liver.

Its subcellular location is the endoplasmic reticulum membrane. It is found in the microsome. The protein resides in the cell membrane. The catalysed reaction is a fatty acid(in) = a fatty acid(out). The enzyme catalyses cholate + ATP + CoA = choloyl-CoA + AMP + diphosphate. It catalyses the reaction chenodeoxycholate + ATP + CoA = chenodeoxycholoyl-CoA + AMP + diphosphate. It carries out the reaction deoxycholate + ATP + CoA = deoxycholoyl-CoA + AMP + diphosphate. The catalysed reaction is lithocholate + ATP + CoA = lithocholoyl-CoA + AMP + diphosphate. The enzyme catalyses (25R)-3alpha,7alpha,12alpha-trihydroxy-5beta-cholestan-26-oate + ATP + CoA = (25R)-3alpha,7alpha,12alpha-trihydroxy-5beta-cholestan-26-oyl-CoA + AMP + diphosphate. It catalyses the reaction a very long-chain fatty acid + ATP + CoA = a very long-chain fatty acyl-CoA + AMP + diphosphate. It carries out the reaction tetracosanoate + ATP + CoA = tetracosanoyl-CoA + AMP + diphosphate. The catalysed reaction is hexacosanoate + ATP + CoA = hexacosanoyl-CoA + AMP + diphosphate. The enzyme catalyses a long-chain fatty acid + ATP + CoA = a long-chain fatty acyl-CoA + AMP + diphosphate. It catalyses the reaction octadecanoate + ATP + CoA = octadecanoyl-CoA + AMP + diphosphate. It carries out the reaction eicosanoate + ATP + CoA = eicosanoyl-CoA + AMP + diphosphate. Its activity is regulated as follows. 3-alpha,7-alpha,12-alpha-trihydroxy-5-beta-cholestanate (THCA) inhibits the activation of cholate. May mediate the import of long-chain fatty acids (LCFA) by facilitating their transport across cell membranes. Also catalyzes the ATP-dependent formation of fatty acyl-CoA using LCFA and very-long-chain fatty acids (VLCFA) as substrates. Mainly functions as a bile acyl-CoA synthetase catalyzing the activation of bile acids via ATP-dependent formation of bile acid CoA thioesters which is necessary for their subsequent conjugation with glycine or taurine. Both primary bile acids (cholic acid and chenodeoxycholic acid) and secondary bile acids (deoxycholic acid and lithocholic acid) are the principal substrates. In vitro, activates 3-alpha,7-alpha,12-alpha-trihydroxy-5-beta-cholestanate ((25R)-3alpha,7alpha,12alpha-trihydroxy-5beta-cholestan-26-oate or THCA), the C27 precursor of cholic acid deriving from the de novo synthesis from cholesterol. Plays an important role in hepatic fatty acid uptake and bile acid reconjugation and recycling but not in de novo synthesis of bile acids. The chain is Long-chain fatty acid transport protein 5 (SLC27A5) from Homo sapiens (Human).